A 498-amino-acid polypeptide reads, in one-letter code: ATP synthase subunit beta, chloroplastic (498 aa).

172 to 179 (GGAGVGKT) serves as a coordination point for ATP.

Belongs to the ATPase alpha/beta chains family. As to quaternary structure, F-type ATPases have 2 components, CF(1) - the catalytic core - and CF(0) - the membrane proton channel. CF(1) has five subunits: alpha(3), beta(3), gamma(1), delta(1), epsilon(1). CF(0) has four main subunits: a(1), b(1), b'(1) and c(9-12).

It localises to the plastid. The protein localises to the chloroplast thylakoid membrane. It catalyses the reaction ATP + H2O + 4 H(+)(in) = ADP + phosphate + 5 H(+)(out). Functionally, produces ATP from ADP in the presence of a proton gradient across the membrane. The catalytic sites are hosted primarily by the beta subunits. The protein is ATP synthase subunit beta, chloroplastic of Solanum tuberosum (Potato).